A 514-amino-acid polypeptide reads, in one-letter code: GMP synthase [glutamine-hydrolyzing] (514 aa).

Positions 9 to 199 (KIIVLDFGSQ…ALNVCGCKGD (191 aa)) constitute a Glutamine amidotransferase type-1 domain. Cys-86 serves as the catalytic Nucleophile. Catalysis depends on residues His-173 and Glu-175. A GMPS ATP-PPase domain is found at 200–389 (WTMENFSEVE…LGMPDAIVWR (190 aa)). Residue 227–233 (SGGVDSS) coordinates ATP.

In terms of assembly, homodimer.

The catalysed reaction is XMP + L-glutamine + ATP + H2O = GMP + L-glutamate + AMP + diphosphate + 2 H(+). It functions in the pathway purine metabolism; GMP biosynthesis; GMP from XMP (L-Gln route): step 1/1. In terms of biological role, catalyzes the synthesis of GMP from XMP. The protein is GMP synthase [glutamine-hydrolyzing] of Listeria monocytogenes serotype 4b (strain F2365).